We begin with the raw amino-acid sequence, 171 residues long: Shikimate kinase (171 aa).

14–19 (GAGKST) contacts ATP. S18 contacts Mg(2+). Substrate contacts are provided by D36, R60, and G82. Residue R120 participates in ATP binding. Position 139 (R139) interacts with substrate. Q156 is an ATP binding site.

Belongs to the shikimate kinase family. As to quaternary structure, monomer. Requires Mg(2+) as cofactor.

It is found in the cytoplasm. It catalyses the reaction shikimate + ATP = 3-phosphoshikimate + ADP + H(+). It functions in the pathway metabolic intermediate biosynthesis; chorismate biosynthesis; chorismate from D-erythrose 4-phosphate and phosphoenolpyruvate: step 5/7. Catalyzes the specific phosphorylation of the 3-hydroxyl group of shikimic acid using ATP as a cosubstrate. The protein is Shikimate kinase of Psychromonas ingrahamii (strain DSM 17664 / CCUG 51855 / 37).